A 126-amino-acid polypeptide reads, in one-letter code: Acidic phospholipase A2 3 (126 aa).

A propeptide spanning residues 1-7 is cleaved from the precursor; the sequence is SNRPMPL. Intrachain disulfides connect Cys18–Cys78, Cys33–Cys125, Cys35–Cys51, Cys50–Cys106, Cys57–Cys99, Cys67–Cys92, and Cys85–Cys97. 3 residues coordinate Ca(2+): Tyr34, Gly36, and Gly38. The active site involves His54. Position 55 (Asp55) interacts with Ca(2+). Residue Asp100 is part of the active site.

The protein belongs to the phospholipase A2 family. Group I subfamily. D49 sub-subfamily. Ca(2+) serves as cofactor. As to expression, expressed by the venom gland.

It is found in the secreted. It catalyses the reaction a 1,2-diacyl-sn-glycero-3-phosphocholine + H2O = a 1-acyl-sn-glycero-3-phosphocholine + a fatty acid + H(+). Functionally, PLA2 catalyzes the calcium-dependent hydrolysis of the 2-acyl groups in 3-sn-phosphoglycerides. The chain is Acidic phospholipase A2 3 from Naja sagittifera (Andaman cobra).